Reading from the N-terminus, the 223-residue chain is MIGEHKALVQRITNETKIQIAISLNGGHIELPESILDKNPTQENNIATQATTSQVIDIHTGVGFLDHMIHALAKHSGWSLIVECIGDLHIDDHHTTEDCGIALGEAFKQALGQVRGVKRFGCGFAPLDEALSRAVVDLSNRPYAVIDLGLKREKIGDLSCEMIPHFLESFIEAARLTVHIDCLRGFNDHHRSESAFKALAVAIREATAPNGTNDVPSTKGVLM.

Belongs to the imidazoleglycerol-phosphate dehydratase family.

It catalyses the reaction D-erythro-1-(imidazol-4-yl)glycerol 3-phosphate = 3-(imidazol-4-yl)-2-oxopropyl phosphate + H2O. The protein operates within amino-acid biosynthesis; L-histidine biosynthesis; L-histidine from 5-phospho-alpha-D-ribose 1-diphosphate: step 6/9. The protein is Imidazoleglycerol-phosphate dehydratase (HIS3) of Zygosaccharomyces bailii.